A 465-amino-acid chain; its full sequence is Asparagine--tRNA ligase (465 aa).

The protein belongs to the class-II aminoacyl-tRNA synthetase family. Homodimer.

The protein resides in the cytoplasm. The catalysed reaction is tRNA(Asn) + L-asparagine + ATP = L-asparaginyl-tRNA(Asn) + AMP + diphosphate + H(+). The chain is Asparagine--tRNA ligase from Clostridium perfringens (strain SM101 / Type A).